The sequence spans 509 residues: MSLHLKPGQLTLADLRQAYLAPVRLSLDPSADAPIAASVACVENIIAEGRTAYGINTGFGLLASTRISPADLEKLQRSIVLSHAAGVGEALDDAMVRLVMLLKVNSLARGFSGIRRKVIDALIALINAEVYPHIPLKGSVGASGDLAPLAHMSLVLIGESRARHRGEWLPAAEALAVAGLEPLTLAAKEGLALLNGTQVSTAYALRGLFEAEDLFAAATVCGGLSVEAMLGSRAPFDARIHAARGQRGQIDVAAAYRDLLTASSEVARSHEKCDKVQDPYSLRCQPQVMGACLTQMRQAAEVLEIEANAVSDNPLVFAAEGDVISGGNFHAEPVAMAADNLALALAEIGSLSERRISLMMDMHMSQLPPFLVANGGVNSGFMIAQVTAAALASDNKALAHPASVDSLPTSANQEDHVSMAPNAGKRLWAMAENVRGILAVEWLGACQGLDFREGLKSSPKLEQARRLLRDKVPYYQEDRFFAPDIEAASQLLASGCLNALLPARLLPSL.

Residues 142-144 constitute a cross-link (5-imidazolinone (Ala-Gly)); that stretch reads ASG. Residue S143 is modified to 2,3-didehydroalanine (Ser).

This sequence belongs to the PAL/histidase family. In terms of processing, contains an active site 4-methylidene-imidazol-5-one (MIO), which is formed autocatalytically by cyclization and dehydration of residues Ala-Ser-Gly.

Its subcellular location is the cytoplasm. It catalyses the reaction L-histidine = trans-urocanate + NH4(+). The protein operates within amino-acid degradation; L-histidine degradation into L-glutamate; N-formimidoyl-L-glutamate from L-histidine: step 1/3. The sequence is that of Histidine ammonia-lyase from Pseudomonas aeruginosa (strain LESB58).